Reading from the N-terminus, the 69-residue chain is uncharacterized protein (69 aa).

A signal peptide spans 1 to 21; that stretch reads MELLIPLSLLGLYLFSGTRDS. The N-linked (GlcNAc...) asparagine glycan is linked to Asn41.

The protein resides in the secreted. This is an uncharacterized protein from Dictyostelium discoideum (Social amoeba).